The chain runs to 294 residues: HTH-type transcriptional regulator TcbR (294 aa).

Residues Met-1–Thr-58 enclose the HTH lysR-type domain. Positions Met-18 to Gln-37 form a DNA-binding region, H-T-H motif.

The protein belongs to the LysR transcriptional regulatory family.

In terms of biological role, involved in regulation of chlorinated catechol metabolism. Transcriptional activator of the tcbCDEF chlorocatechol oxidative operon. May bind 2-chloromuconate as an inducer. This chain is HTH-type transcriptional regulator TcbR (tcbR), found in Pseudomonas sp. (strain P51).